Here is a 199-residue protein sequence, read N- to C-terminus: Gene 66 protein (199 aa).

The protein is Gene 66 protein (66) of Mycobacterium (Mycobacteriophage D29).